Reading from the N-terminus, the 383-residue chain is Probable cell wall hydrolase LytN (383 aa).

A signal peptide spans 1-49 (MFIYYCKECSIMNKQQSKVRYSIRKVSIGILSISIGMFLALGMSNKAYA). Positions 175–219 (QIYTVKKGDTLSAIALKYKTTVSNIQNTNNIANPNLIFIGQKLKV) constitute a LysM domain. The region spanning 241–378 (NSSTLNYLKT…NYENDMIFIR (138 aa)) is the Peptidase C51 domain.

Its subcellular location is the secreted. In terms of biological role, probably involved in peptidoglycan hydrolysis. The chain is Probable cell wall hydrolase LytN (lytN) from Staphylococcus aureus (strain Mu50 / ATCC 700699).